Reading from the N-terminus, the 56-residue chain is PI-stichotoxin-Hmg3b (56 aa).

The BPTI/Kunitz inhibitor domain maps to 4–54 (CLEPKVVGPCKAGIRRFYFDSETGKCTLFLYGGCKGNGNNFETLHACRAIC). Intrachain disulfides connect C4-C54, C13-C37, and C29-C50.

It belongs to the venom Kunitz-type family. Sea anemone type 2 potassium channel toxin subfamily. Post-translationally, contains three disulfide bonds.

The protein localises to the secreted. Its subcellular location is the nematocyst. Serine protease inhibitor. The chain is PI-stichotoxin-Hmg3b from Heteractis magnifica (Magnificent sea anemone).